The primary structure comprises 1015 residues: Probable beta-galactosidase B (1015 aa).

A signal peptide spans 1–21; that stretch reads MAHIYRLLLLLLSNLWFSAAA. N-linked (GlcNAc...) asparagine glycosylation occurs at Asn-23. A substrate-binding site is contributed by Tyr-90. N-linked (GlcNAc...) asparagine glycosylation is present at Asn-100. The substrate site is built by Asn-135, Ala-136, and Glu-137. The N-linked (GlcNAc...) asparagine glycan is linked to Asn-172. Asn-195 lines the substrate pocket. Glu-196 (proton donor) is an active-site residue. An N-linked (GlcNAc...) asparagine glycan is attached at Asn-211. A substrate-binding site is contributed by Tyr-265. Cys-271 and Cys-324 are joined by a disulfide. Catalysis depends on Glu-308, which acts as the Nucleophile. Tyr-373 is a binding site for substrate. Asn-411, Asn-441, Asn-456, Asn-554, Asn-679, Asn-735, Asn-775, Asn-821, and Asn-878 each carry an N-linked (GlcNAc...) asparagine glycan.

It belongs to the glycosyl hydrolase 35 family.

Its subcellular location is the secreted. The enzyme catalyses Hydrolysis of terminal non-reducing beta-D-galactose residues in beta-D-galactosides.. Functionally, cleaves beta-linked terminal galactosyl residues from gangliosides, glycoproteins, and glycosaminoglycans. In Neosartorya fischeri (strain ATCC 1020 / DSM 3700 / CBS 544.65 / FGSC A1164 / JCM 1740 / NRRL 181 / WB 181) (Aspergillus fischerianus), this protein is Probable beta-galactosidase B (lacB).